A 128-amino-acid chain; its full sequence is 3-aminoacrylate deaminase RutC (128 aa).

It belongs to the RutC family. Homotrimer.

The catalysed reaction is (Z)-3-aminoacrylate + H2O + H(+) = 3-oxopropanoate + NH4(+). Involved in pyrimidine catabolism. Catalyzes the deamination of 3-aminoacrylate to malonic semialdehyde, a reaction that can also occur spontaneously. RutC may facilitate the reaction and modulate the metabolic fitness, rather than catalyzing essential functions. The sequence is that of 3-aminoacrylate deaminase RutC from Shigella flexneri serotype X (strain 2002017).